The sequence spans 301 residues: Oxygen-dependent coproporphyrinogen-III oxidase (301 aa).

Residues 49–58 (VMVDGAVIEK) are important for dimerization. Substrate is bound at residue serine 93. Histidine 107 (proton donor) is an active-site residue. Substrate contacts are provided by residues 109-111 (NVR) and 259-261 (GGR). The important for dimerization stretch occupies residues 241–276 (YAEFNLVIDRGTKFGLQSGGRTESILISLPPRARWG).

It belongs to the aerobic coproporphyrinogen-III oxidase family. In terms of assembly, homodimer.

The protein resides in the cytoplasm. It catalyses the reaction coproporphyrinogen III + O2 + 2 H(+) = protoporphyrinogen IX + 2 CO2 + 2 H2O. The protein operates within porphyrin-containing compound metabolism; protoporphyrin-IX biosynthesis; protoporphyrinogen-IX from coproporphyrinogen-III (O2 route): step 1/1. Involved in the heme biosynthesis. Catalyzes the aerobic oxidative decarboxylation of propionate groups of rings A and B of coproporphyrinogen-III to yield the vinyl groups in protoporphyrinogen-IX. The chain is Oxygen-dependent coproporphyrinogen-III oxidase from Leishmania major.